Here is a 420-residue protein sequence, read N- to C-terminus: UDP-N-acetyl-D-mannosamine dehydrogenase (420 aa).

The NAD(+) site is built by Y13, I14, D33, T85, and T126. R160, V161, K212, N216, R219, H250, R252, and G263 together coordinate UDP-N-acetyl-alpha-D-mannosaminouronate. The Proton donor/acceptor role is filled by K212. The active-site Nucleophile is the C266. UDP-N-acetyl-alpha-D-mannosaminouronate contacts are provided by F330 and K331. R338 contributes to the NAD(+) binding site. K416 serves as a coordination point for UDP-N-acetyl-alpha-D-mannosaminouronate.

It belongs to the UDP-glucose/GDP-mannose dehydrogenase family. WecC subfamily. In terms of assembly, homodimer.

It carries out the reaction UDP-N-acetyl-alpha-D-mannosamine + 2 NAD(+) + H2O = UDP-N-acetyl-alpha-D-mannosaminouronate + 2 NADH + 3 H(+). It functions in the pathway bacterial outer membrane biogenesis; enterobacterial common antigen biosynthesis. Catalyzes the four-electron oxidation of UDP-N-acetyl-D-mannosamine (UDP-ManNAc), reducing NAD(+) and releasing UDP-N-acetylmannosaminuronic acid (UDP-ManNAcA). The polypeptide is UDP-N-acetyl-D-mannosamine dehydrogenase (Yersinia pestis).